The primary structure comprises 398 residues: 1-deoxy-D-xylulose 5-phosphate reductoisomerase (398 aa).

7 residues coordinate NADPH: Thr-10, Gly-11, Ser-12, Ile-13, Gly-36, Asn-38, and Asn-124. 1-deoxy-D-xylulose 5-phosphate is bound at residue Lys-125. Residue Glu-126 participates in NADPH binding. Asp-150 contributes to the Mn(2+) binding site. 4 residues coordinate 1-deoxy-D-xylulose 5-phosphate: Ser-151, Glu-152, Ser-186, and His-209. Mn(2+) is bound at residue Glu-152. Residue Gly-215 participates in NADPH binding. 1-deoxy-D-xylulose 5-phosphate contacts are provided by Ser-222, Asn-227, Lys-228, and Glu-231. Residue Glu-231 participates in Mn(2+) binding.

Belongs to the DXR family. In terms of assembly, homodimer. Mg(2+) is required as a cofactor. The cofactor is Mn(2+).

The enzyme catalyses 2-C-methyl-D-erythritol 4-phosphate + NADP(+) = 1-deoxy-D-xylulose 5-phosphate + NADPH + H(+). The protein operates within isoprenoid biosynthesis; isopentenyl diphosphate biosynthesis via DXP pathway; isopentenyl diphosphate from 1-deoxy-D-xylulose 5-phosphate: step 1/6. Its function is as follows. Catalyzes the NADPH-dependent rearrangement and reduction of 1-deoxy-D-xylulose-5-phosphate (DXP) to 2-C-methyl-D-erythritol 4-phosphate (MEP). The polypeptide is 1-deoxy-D-xylulose 5-phosphate reductoisomerase (Pectobacterium atrosepticum (strain SCRI 1043 / ATCC BAA-672) (Erwinia carotovora subsp. atroseptica)).